A 622-amino-acid polypeptide reads, in one-letter code: Cilia- and flagella-associated protein 206 (622 aa).

This sequence belongs to the CFAP206 family.

It localises to the cytoplasm. It is found in the cytoskeleton. Its subcellular location is the cilium axoneme. The protein localises to the cilium basal body. Its function is as follows. Essential for sperm motility and is involved in the regulation of the beating frequency of motile cilia on the epithelial cells of the respiratory tract. Required for the establishment of radial spokes in sperm flagella. The protein is Cilia- and flagella-associated protein 206 of Rattus norvegicus (Rat).